The chain runs to 418 residues: ATP phosphoribosyltransferase regulatory subunit (418 aa).

It belongs to the class-II aminoacyl-tRNA synthetase family. HisZ subfamily. In terms of assembly, heteromultimer composed of HisG and HisZ subunits.

It localises to the cytoplasm. The protein operates within amino-acid biosynthesis; L-histidine biosynthesis; L-histidine from 5-phospho-alpha-D-ribose 1-diphosphate: step 1/9. Required for the first step of histidine biosynthesis. May allow the feedback regulation of ATP phosphoribosyltransferase activity by histidine. The chain is ATP phosphoribosyltransferase regulatory subunit from Halothermothrix orenii (strain H 168 / OCM 544 / DSM 9562).